Consider the following 473-residue polypeptide: T-box transcription factor TBX6L (473 aa).

The T-box DNA-binding region spans 43–217; sequence LWDKFSSIGT…NNPFAKGFRD (175 aa). Residues 342–361 are disordered; it reads RLNPQETHHNSRPKIQLQPP.

As to expression, exclusively expressed by ventral mesendoderm.

It localises to the nucleus. In terms of biological role, probable transcriptional regulator involved in developmental processes. The sequence is that of T-box transcription factor TBX6L (tbx6l) from Danio rerio (Zebrafish).